Consider the following 1057-residue polypeptide: MLCWGNASYGQLGLGGIDEEIVLEPRRSDFFVNKKVRDVGCGLRHTVFVLDDGTVYTCGCNDLGQLGHEKSRKKPEQVVALDAQNIVAVACGEAHTLALNDKGQVYAWGLDSDGQLGLQGSEECIRVPRNIKSLSDIQIVQVACGYYHSLALSKASEVFCWGQNKYGQLGLGIDCQKQTSPQLIKSLLGIPFMQVAAGGAHSFVLTLSGAIFGWGRNKFGQLGLNDENDRYVPNLLKSLRSQKIVYICCGEDHTAALTKEGGVFTFGAGGYGQLGHNSTSHEINPRKVFELMGSIVTQVACGRQHTSAFVPSSGRIYSFGLGGNGQLGTGSTSNRKSPFTVKGNWFSYNGQCPQDIGSEDYFCVKRIFSGGDQSFSHYSSPQNCGPPDDFRCSDPSKQIWTVNEALIQKWLSYPSGRFPVEIANEIDGTFSSSGCLNGSFLAISNDDHYRTGTRFSGVDMNAARLLFHKLIQPDHPQISQQVAASLEKNLIPKLTSSLPDVEALRFYLTLPECPLMSDCNNFTTIAIPFGTALVNLEKAPLKVLENWWSVLEPPLFLKIVELFKEVVVHLLKLYKIGIPPSERRIFNSFLHTALKVLEILHRVNEKTGQLIQYDKFYIHEVQELIDIRNDYINWVQQQAYGVDVSHGVTELADIPVTICTYPFVFDAQAKTTLLQTDAVLQMQMAIDQAHRQNVSSLFLPVIESVNPCLILVVRRENIVGDAMEVLRKTKNIDYKKPLKVIFVGEDAVDAGGVRKEFFLLIMRELLDPKYGMFRYYEDSRLIWFSDKTFEDSDLFHLIGVICGLAIYNFTIVDLHFPLALYKKLLKRKPSLDDLKELMPAVGRSMQQLLDYPEDDIEETFCLNFTITVENFGATEVKELVLNGADTAVNRQNRQEFVDAYVDYIFNKSVASLFDAFHAGFHKVCGGKVLLLFQPNELQAMVIGNTNYDWKELEKNTEYKGEYWADHPTIKIFWEVFHELPLEKKKQFLLFLTGSDRIPILGMKSLKLVIQSTGGGESYLPVSHTCFNLLDLPKYTEKETLRCKLIQAIDHNEGFSLI.

7 RCC1 repeats span residues Met1–Asp51, Asp52–Asp101, Lys102–Lys154, Ser156–Leu207, Ser208–Lys259, Gly261–Pro311, and Ser313–Arg366. In terms of domain architecture, HECT spans Lys730–Ile1057. Cys1025 (glycyl thioester intermediate) is an active-site residue.

As to expression, ubiquitously expressed, highest expression is found in testis during spermiogenesis. It is specifically found in spermatogonia, spermatocytes, and spermatids with little or no expression detectable in the spermatozoa, or interstitial cells.

It localises to the cytoplasm. The protein resides in the cytosol. The enzyme catalyses S-ubiquitinyl-[E2 ubiquitin-conjugating enzyme]-L-cysteine + [acceptor protein]-L-lysine = [E2 ubiquitin-conjugating enzyme]-L-cysteine + N(6)-ubiquitinyl-[acceptor protein]-L-lysine.. It participates in protein modification; protein ubiquitination. In terms of biological role, probable E3 ubiquitin-protein ligase involved in either protein trafficking or in the distribution of cellular structures. Required for spermatozoon maturation and fertility, and for the removal of the cytoplasmic droplet of the spermatozoon. E3 ubiquitin-protein ligases accept ubiquitin from an E2 ubiquitin-conjugating enzyme in the form of a thioester and then directly transfer it to targeted substrates. The chain is Probable E3 ubiquitin-protein ligase HERC4 (Herc4) from Mus musculus (Mouse).